A 220-amino-acid chain; its full sequence is Dual specificity protein phosphatase 19 (220 aa).

Met-1 carries the post-translational modification N-acetylmethionine. In terms of domain architecture, Tyrosine-protein phosphatase spans 64–205 (QVGVIKPWLL…LRTYQVGKES (142 aa)). Residue Cys-149 is the Phosphocysteine intermediate of the active site.

Belongs to the protein-tyrosine phosphatase family. Non-receptor class dual specificity subfamily.

The enzyme catalyses O-phospho-L-tyrosyl-[protein] + H2O = L-tyrosyl-[protein] + phosphate. It carries out the reaction O-phospho-L-seryl-[protein] + H2O = L-seryl-[protein] + phosphate. It catalyses the reaction O-phospho-L-threonyl-[protein] + H2O = L-threonyl-[protein] + phosphate. Its activity is regulated as follows. Phosphatase activity is enhanced by Ca(2+) and Mn(2+). Functionally, has a dual specificity toward Ser/Thr and Tyr-containing proteins. This Mus musculus (Mouse) protein is Dual specificity protein phosphatase 19.